The sequence spans 172 residues: Monopolar attachment protein 1 (172 aa).

The segment covering 15–30 (KKNKNPKISNSKKKNS) has biased composition (basic residues). Residues 15–43 (KKNKNPKISNSKKKNSTRPALQDKTNQTL) form a disordered region. The span at 31–43 (TRPALQDKTNQTL) shows a compositional bias: polar residues. The short motif at 100 to 102 (STP) is the POLO box domain (PBD)-binding element.

In terms of assembly, interacts with rec8, Interacts with plo1.

The protein localises to the nucleus. Its subcellular location is the chromosome. The protein resides in the centromere. It localises to the kinetochore. Its function is as follows. Plays an important role in chromosome segregation during meiosis I by allowing meiotic rec8 to establish cohesion at the centromeric central core and thereby promote the side-by-side structure of kinetochores at meiosis I. Enables monopolar attachment during meiosis I. Required to facilitate kinetochore mono-orientation during meiosis I, when kinetochores on sister chromosomes face the same direction and are thus captured and pulled by spindle fibers from the same pole. Acts in collaboration with plo1. The sequence is that of Monopolar attachment protein 1 (moa1) from Schizosaccharomyces pombe (strain 972 / ATCC 24843) (Fission yeast).